Here is a 601-residue protein sequence, read N- to C-terminus: Elongation factor 4 (601 aa).

One can recognise a tr-type G domain in the interval 5 to 187 (EHIRNFSIIA…AIVERLPAPE (183 aa)). GTP contacts are provided by residues 17 to 22 (DHGKST) and 134 to 137 (NKVD).

The protein belongs to the TRAFAC class translation factor GTPase superfamily. Classic translation factor GTPase family. LepA subfamily.

It localises to the cell inner membrane. It catalyses the reaction GTP + H2O = GDP + phosphate + H(+). Functionally, required for accurate and efficient protein synthesis under certain stress conditions. May act as a fidelity factor of the translation reaction, by catalyzing a one-codon backward translocation of tRNAs on improperly translocated ribosomes. Back-translocation proceeds from a post-translocation (POST) complex to a pre-translocation (PRE) complex, thus giving elongation factor G a second chance to translocate the tRNAs correctly. Binds to ribosomes in a GTP-dependent manner. The chain is Elongation factor 4 from Nitratidesulfovibrio vulgaris (strain DSM 19637 / Miyazaki F) (Desulfovibrio vulgaris).